Consider the following 202-residue polypeptide: Nuclear transcription factor Y subunit C-6 (202 aa).

Low complexity predominate over residues 1 to 16; sequence MAENNNNNGDNMNNDN. Disordered regions lie at residues 1-29 and 180-202; these read MAENNNNNGDNMNNDNHQQPPSYSQLPPM and AWPAAAGDGEDDAEDNGGNGGGN. The segment covering 17-29 has biased composition (polar residues); the sequence is HQQPPSYSQLPPM.

It belongs to the NFYC/HAP5 subunit family. Heterotrimeric transcription factor composed of three components, NF-YA, NF-YB and NF-YC. NF-YB and NF-YC must interact and dimerize for NF-YA association and DNA binding. As to expression, expressed in flowers and siliques.

Its subcellular location is the nucleus. Functionally, stimulates the transcription of various genes by recognizing and binding to a CCAAT motif in promoters. In Arabidopsis thaliana (Mouse-ear cress), this protein is Nuclear transcription factor Y subunit C-6 (NFYC6).